The following is a 171-amino-acid chain: Tetratricopeptide repeat protein 9C (171 aa).

TPR repeat units lie at residues 8–41 (AQLY…LRGL), 72–107 (TDCY…QPEN), and 108–141 (AKAL…QPKD).

Belongs to the TTC9 family.

The chain is Tetratricopeptide repeat protein 9C (Ttc9c) from Rattus norvegicus (Rat).